We begin with the raw amino-acid sequence, 232 residues long: ATP synthase subunit a (232 aa).

The next 6 membrane-spanning stretches (helical) occupy residues 18 to 38, 74 to 94, 107 to 127, 142 to 162, 173 to 193, and 195 to 215; these read LLFIPMNLFSIVFALSWIAFI, WAGLITTVFIVILSANVLGLF, TYSLGFPIWMAVNILGFYLAF, ALIPLMVWIETLSLFAQPIAL, GHLLIFLLSTAIWLLSSSLMV, and SIPIFVIFVLLFILEIGVACI.

This sequence belongs to the ATPase A chain family. As to quaternary structure, F-type ATPases have 2 components, CF(1) - the catalytic core - and CF(0) - the membrane proton channel. CF(1) has five subunits: alpha(3), beta(3), gamma(1), delta(1), epsilon(1). CF(0) has three main subunits: a, b and c.

The protein localises to the mitochondrion inner membrane. Functionally, mitochondrial membrane ATP synthase (F(1)F(0) ATP synthase or Complex V) produces ATP from ADP in the presence of a proton gradient across the membrane which is generated by electron transport complexes of the respiratory chain. F-type ATPases consist of two structural domains, F(1) - containing the extramembraneous catalytic core and F(0) - containing the membrane proton channel, linked together by a central stalk and a peripheral stalk. During catalysis, ATP synthesis in the catalytic domain of F(1) is coupled via a rotary mechanism of the central stalk subunits to proton translocation. Key component of the proton channel; it may play a direct role in the translocation of protons across the membrane. The chain is ATP synthase subunit a (ATP6) from Paracentrotus lividus (Common sea urchin).